Here is a 265-residue protein sequence, read N- to C-terminus: 4-hydroxy-tetrahydrodipicolinate reductase (265 aa).

NAD(+) contacts are provided by residues 7-12 and Asp33; that span reads GASGRM. Residue Arg34 coordinates NADP(+). Residues 96–98 and 120–123 contribute to the NAD(+) site; these read GTT and AANM. The active-site Proton donor/acceptor is the His153. Position 154 (His154) interacts with (S)-2,3,4,5-tetrahydrodipicolinate. The active-site Proton donor is Lys157. 163-164 provides a ligand contact to (S)-2,3,4,5-tetrahydrodipicolinate; that stretch reads GT.

This sequence belongs to the DapB family.

It is found in the cytoplasm. It catalyses the reaction (S)-2,3,4,5-tetrahydrodipicolinate + NAD(+) + H2O = (2S,4S)-4-hydroxy-2,3,4,5-tetrahydrodipicolinate + NADH + H(+). It carries out the reaction (S)-2,3,4,5-tetrahydrodipicolinate + NADP(+) + H2O = (2S,4S)-4-hydroxy-2,3,4,5-tetrahydrodipicolinate + NADPH + H(+). The protein operates within amino-acid biosynthesis; L-lysine biosynthesis via DAP pathway; (S)-tetrahydrodipicolinate from L-aspartate: step 4/4. Its function is as follows. Catalyzes the conversion of 4-hydroxy-tetrahydrodipicolinate (HTPA) to tetrahydrodipicolinate. The sequence is that of 4-hydroxy-tetrahydrodipicolinate reductase from Burkholderia orbicola (strain MC0-3).